Reading from the N-terminus, the 327-residue chain is Annexin A8 (327 aa).

4 Annexin repeats span residues 21-92 (FNPD…ALMY), 93-164 (PPYS…CLLQ), 177-249 (GLVL…TVVK), and 253-324 (NVHS…NLVG). 4 residues coordinate Ca(2+): Met-266, Gly-268, Gly-270, and Asp-310.

The protein belongs to the annexin family.

This protein is an anticoagulant protein that acts as an indirect inhibitor of the thromboplastin-specific complex, which is involved in the blood coagulation cascade. This Mus musculus (Mouse) protein is Annexin A8 (Anxa8).